The primary structure comprises 51 residues: Large ribosomal subunit protein bL33 (51 aa).

This sequence belongs to the bacterial ribosomal protein bL33 family.

This is Large ribosomal subunit protein bL33 from Methylococcus capsulatus (strain ATCC 33009 / NCIMB 11132 / Bath).